Reading from the N-terminus, the 501-residue chain is L-ornithine N(5)-monooxygenase (501 aa).

The segment at 1 to 31 (MESVERKSESSYLGMRNMQPEQRLSLDPPRL) is disordered. FAD contacts are provided by residues 83-91 (ERQKQFAWH) and glutamine 102. Substrate is bound at residue lysine 107. Valine 168 lines the FAD pocket. NADP(+) contacts are provided by residues 254-257 (SGQS) and arginine 279. Residues 293 to 296 (NEIF) and asparagine 323 contribute to the substrate site. 323-325 (NYS) contributes to the NADP(+) binding site. Positions 366–390 (EHHGPQSRMRIHLKSSKPESEGAAN) are disordered. The segment covering 381–390 (SKPESEGAAN) has biased composition (basic and acidic residues). 466 to 468 (SLL) serves as a coordination point for FAD. A substrate-binding site is contributed by serine 469.

Belongs to the lysine N(6)-hydroxylase/L-ornithine N(5)-oxygenase family. As to quaternary structure, homotetramer. FAD serves as cofactor.

The catalysed reaction is L-ornithine + NADPH + O2 = N(5)-hydroxy-L-ornithine + NADP(+) + H2O. The enzyme catalyses L-ornithine + NADH + O2 = N(5)-hydroxy-L-ornithine + NAD(+) + H2O. The protein operates within siderophore biosynthesis; ferrichrome biosynthesis. In terms of biological role, L-ornithine N(5)-monooxygenase; part of the siderophore biosynthetic pathway. Aspergillus fumigatus produces four types of siderophores, low-molecular-mass iron chelators, including excreted fusarinine C (FsC) and triacetylfusarinine C (TAFC) for iron uptake; and intacellular ferricrocin (FC) for hyphal and hydroxyferricrocin (HFC) for conidial iron distribution and storage. TAFC consists of three N(2)-acetyl-N(5)-anhydromevalonyl-N(5)-hydroxyornithine residues cyclically linked by ester bonds; FC is a cyclic hexapeptide with the structure Gly-Ser-Gly-(N(5)-acetyl-N(5)-hydroxyornithine)x3. The biosynthesis of all four siderophores depends on the hydroxylation of ornithine, catalyzed by the monooxygenase sidA. SidA is highly specific for its substrate, only hydrolyzing l-ornithine, and has preference for NADPH over NADH, NADPH playing a role in stabilization of the C4a-hydroperoxyflavin intermediate. Subsequently, the pathways for biosynthesis of extra- and intracellular siderophores split. For biosynthesis of extracellular siderophores, the transacylase sidF transfers anhydromevalonyl to N(5)-hydroxyornithine. The required anhydromevalonyl-CoA moiety is derived from mevalonate by CoA ligation and dehydration catalyzed by sidI and sidH respectively. The acetylation of N(5)-hydroxyornithine for FC biosynthesis involves the constitutively expressed sidL. FC is hydroxylated to HFC by an as yet uncharacterized enzyme during conidiation. Assembly of fusarinine C (FsC) and FC is catalyzed by two different nonribosomal peptide synthetases (NRPS), sidD and sidC respectively. Subsequently, sidG catalyzes N2-acetylation of FsC for forming TAFC. Both extra- and intracellular siderophores are crucial for growth during iron limitation and virulence. The chain is L-ornithine N(5)-monooxygenase from Aspergillus fumigatus (strain ATCC MYA-4609 / CBS 101355 / FGSC A1100 / Af293) (Neosartorya fumigata).